The primary structure comprises 357 residues: DNA integrity scanning protein DisA (357 aa).

The 139-residue stretch at 3-141 folds into the DAC domain; it reads RPTLRETVAR…GGERHVVADS (139 aa). Residues G70, L88, and 101-105 contribute to the ATP site; that span reads TRHRS.

It belongs to the DisA family. In terms of assembly, homooctamer. Mg(2+) is required as a cofactor.

It catalyses the reaction 2 ATP = 3',3'-c-di-AMP + 2 diphosphate. In terms of biological role, participates in a DNA-damage check-point. DisA forms globular foci that rapidly scan along the chromosomes searching for lesions. Also has diadenylate cyclase activity, catalyzing the condensation of 2 ATP molecules into cyclic di-AMP (c-di-AMP). c-di-AMP likely acts as a signaling molecule that may couple DNA integrity with a cellular process. The protein is DNA integrity scanning protein DisA of Mycobacterium avium (strain 104).